A 379-amino-acid polypeptide reads, in one-letter code: MKKHVMLVKPFSLEDEKDSENTPPNLIQRILSLFKNVRPGSDLTNFQLPPQMNLARSQLQCYGEIVYSFDGHDLLGECSRRDKPIERMKAMVTWYISTLRPLIFGLAPYNPVIGETHHVSNGHINVLAEQISHHPPVSALHATHEKENVDVLLCQYFTPKFRGAYVDVEVKGKRVVKLLNHKETYEMNQPKLLMTFLPAMGAHWAGKIVIKCPETGLGAELQLLSDSFLSRFTGNNKRAIKGKIFESSSRKQLYEISGHWDRTVTAKNTKTGQLEVIYKASENIAKLKTPIVENLQEVSESESAVVWGEVSEGIVTNNWEKAREAKRDVEEKQRESLRKRKASGQSWIPKHFSVARTGKDWDCVPLQPTVPRAPIVVPL.

The protein belongs to the OSBP family. In terms of tissue distribution, expressed in flowers.

In terms of biological role, may be involved in the transport of sterols. In Arabidopsis thaliana (Mouse-ear cress), this protein is Oxysterol-binding protein-related protein 4C (ORP4C).